The primary structure comprises 309 residues: MGSFDRQRAVPKFKTATPSPLPLSPSPYFTMPPGLTPADFLDSPLLFTSSNILPSPTTGTFPAQSLNYNNNGLLIDKNEIKYEDTTPPLFLPSMVTQPLPQLDLFKSEIMSSNKTSDDGYNWRKYGQKQVKGSENPRSYFKCTYPNCLTKKKVETSLVKGQMIEIVYKGSHNHPKPQSTKRSSSTAIAAHQNSSNGDGKDIGEDETEAKRWKREENVKEPRVVVQTTSDIDILDDGYRWRKYGQKVVKGNPNPRSYYKCTFTGCFVRKHVERAFQDPKSVITTYEGKHKHQIPTPRRGPVLRLLGKTET.

The interval Met1–Ser24 is disordered. The segment at residues Ser111–Pro176 is a DNA-binding region (WRKY 1). Zn(2+) is bound by residues Cys142, Cys147, His171, and His173. A disordered region spans residues Tyr167–Arg210. Over residues Lys175–Gly196 the composition is skewed to polar residues. The span at Asp197 to Arg210 shows a compositional bias: basic and acidic residues. The segment at residues Ser228–Pro293 is a DNA-binding region (WRKY 2). The Zn(2+) site is built by Cys259, Cys264, His288, and His290.

Belongs to the WRKY group I family. Interacts with VQ10.

Its subcellular location is the nucleus. Functionally, transcription factor. Interacts specifically with the W box (5'-(T)TGAC[CT]-3'), a frequently occurring elicitor-responsive cis-acting element. Functions with WRKY25 and WRKY33 as positive regulator of plant thermotolerance by partially participating in ethylene-response signal transduction pathway. This chain is Probable WRKY transcription factor 26 (WRKY26), found in Arabidopsis thaliana (Mouse-ear cress).